Reading from the N-terminus, the 255-residue chain is Reaction center protein L chain (255 aa).

A run of 3 helical transmembrane segments spans residues 11–33 (FFGVTAAFFIMLGTALIIWGAAL), 61–89 (GGLWQIITVCAIGAFGSWALREVEISRKL), and 94–116 (HVPAAFSVAIFAYVTLEVIRPLL). Residues His-131 and His-151 each coordinate (7R,8Z)-bacteriochlorophyll b. A helical transmembrane segment spans residues 149–176 (PMHMVAVTLFFTTTLALALHGSLVLAAI). His-168 is a Fe cation binding site. Position 194 (Phe-194) interacts with a ubiquinone. The helical transmembrane segment at 203-228 (GTLGIHRLGLFLALGAGFASATCILL) threads the bilayer. His-208 lines the Fe cation pocket.

The protein belongs to the reaction center PufL/M/PsbA/D family. Reaction center is composed of four bacteriochlorophylls, two bacteriopheophytins, two ubiquinones, one iron, and two highly hydrophobic polypeptide chains (designated L and M).

It is found in the cell inner membrane. The reaction center is a membrane-bound complex that mediates the initial photochemical event in the electron transfer process of photosynthesis. The chain is Reaction center protein L chain (pufL) from Acidiphilium multivorum.